The chain runs to 314 residues: MHPSTSRPSRRTLLTATAGAALAAATLVPGTAHASSGGRGHGSGSVSDAERRLAGLERASGARLGVYAYDTGSGRTVAYRADELFPMCSVFKTLSSAAVLRDLDRNGEFLSRRILYTQDDVEQADGAGPETGKPQNLANAQLTVEELCEVSITASDNCAANLMLRELGGPAAVTRFVRSLGDRVTRLDRWEPELNSAEPGRVTDTTSPRAITRTYGRLVLGDALNPRDRRLLTSWLLANTTSGDRFRAGLPDDWTLGDKTGAGRYGTNNDAGVTWPPGRAPIVLTVLTAKTEQDAARDDGLVADAARVLAETLG.

The tat-type signal signal peptide spans 1–39 (MHPSTSRPSRRTLLTATAGAALAAATLVPGTAHASSGGR). A disordered region spans residues 31 to 50 (TAHASSGGRGHGSGSVSDAE). Catalysis depends on serine 89, which acts as the Acyl-ester intermediate. Residue 259–261 (KTG) coordinates substrate.

This sequence belongs to the class-A beta-lactamase family. Predicted to be exported by the Tat system. The position of the signal peptide cleavage has been experimentally proven.

The enzyme catalyses a beta-lactam + H2O = a substituted beta-amino acid. The protein is Beta-lactamase of Streptomyces albus G.